The sequence spans 407 residues: Arylacetamide deacetylase-like 3 (407 aa).

The Involved in the stabilization of the negatively charged intermediate by the formation of the oxyanion hole signature appears at 119-121 (HGG). Catalysis depends on residues Ser193, Asp347, and His377.

This sequence belongs to the 'GDXG' lipolytic enzyme family.

In Homo sapiens (Human), this protein is Arylacetamide deacetylase-like 3 (AADACL3).